A 391-amino-acid chain; its full sequence is Small ribosomal subunit protein bS1 (391 aa).

4 S1 motif domains span residues 16–90 (GDKV…LSRR), 108–173 (NEII…LSRK), 194–262 (GDVI…LSIK), and 279–348 (NDVI…LSIK).

The protein belongs to the bacterial ribosomal protein bS1 family.

Functionally, binds mRNA; thus facilitating recognition of the initiation point. It is needed to translate mRNA with a short Shine-Dalgarno (SD) purine-rich sequence. In Staphylococcus aureus (strain N315), this protein is Small ribosomal subunit protein bS1 (rpsA).